Here is a 438-residue protein sequence, read N- to C-terminus: 26S proteasome regulatory subunit 7 homolog (438 aa).

Basic and acidic residues predominate over residues 1–15 (MPPKEDWEKYQKPVD). The segment at 1-31 (MPPKEDWEKYQKPVDTEEENDKNPPPLDEGD) is disordered. At S90 the chain carries Phosphoserine. An ATP-binding site is contributed by 220–227 (GPPGTGKT).

It belongs to the AAA ATPase family.

It is found in the cytoplasm. Its subcellular location is the nucleus. The 26S proteasome is involved in the ATP-dependent degradation of ubiquitinated proteins. The regulatory (or ATPase) complex confers ATP dependency and substrate specificity to the 26S complex. The sequence is that of 26S proteasome regulatory subunit 7 homolog (rpt1) from Schizosaccharomyces pombe (strain 972 / ATCC 24843) (Fission yeast).